The chain runs to 281 residues: 3-methyl-2-oxobutanoate hydroxymethyltransferase (281 aa).

Positions 49 and 88 each coordinate Mg(2+). 3-methyl-2-oxobutanoate is bound by residues 49 to 50 (DS), Asp88, and Lys118. Glu120 provides a ligand contact to Mg(2+). Residue Glu186 is the Proton acceptor of the active site.

This sequence belongs to the PanB family. In terms of assembly, homodecamer; pentamer of dimers. Mg(2+) serves as cofactor.

The protein localises to the cytoplasm. The catalysed reaction is 3-methyl-2-oxobutanoate + (6R)-5,10-methylene-5,6,7,8-tetrahydrofolate + H2O = 2-dehydropantoate + (6S)-5,6,7,8-tetrahydrofolate. Its pathway is cofactor biosynthesis; (R)-pantothenate biosynthesis; (R)-pantoate from 3-methyl-2-oxobutanoate: step 1/2. Functionally, catalyzes the reversible reaction in which hydroxymethyl group from 5,10-methylenetetrahydrofolate is transferred onto alpha-ketoisovalerate to form ketopantoate. The polypeptide is 3-methyl-2-oxobutanoate hydroxymethyltransferase (Chelativorans sp. (strain BNC1)).